The sequence spans 666 residues: uncharacterized protein (666 aa).

This sequence belongs to the MG032/MG096/MG288 family.

This is an uncharacterized protein from Mycoplasma pneumoniae (strain ATCC 29342 / M129 / Subtype 1) (Mycoplasmoides pneumoniae).